The following is a 392-amino-acid chain: Sugar efflux transporter A (392 aa).

Over 1–10 the chain is Cytoplasmic; it reads MIWIMTMARR. A helical membrane pass occupies residues 11-31; sequence MNGVYAAFMLVAFMMGVAGAL. The Periplasmic segment spans residues 32–48; that stretch reads QAPTLSLFLSREVGAQP. Residues 49–69 form a helical membrane-spanning segment; sequence FWIGLFYTVNAIAGIGVSLWL. Over 70–81 the chain is Cytoplasmic; the sequence is AKRSDSQGDRRK. A helical transmembrane segment spans residues 82–102; sequence LIIFCCLMAIGNALLFAFNRH. Residues 103 to 106 are Periplasmic-facing; sequence YLTL. A helical transmembrane segment spans residues 107-127; sequence ITCGVLLASLANTAMPQLFAL. Residues 128 to 149 lie on the Cytoplasmic side of the membrane; that stretch reads AREYADNSAREVVMFSSVMRAQ. Residues 150 to 170 form a helical membrane-spanning segment; it reads LSLAWVIGPPLAFMLALNYGF. A topological domain (periplasmic) is located at residue T171. Residues 172-192 traverse the membrane as a helical segment; the sequence is VMFSIAAGIFTLSLVLIAFML. At 193-219 the chain is on the cytoplasmic side; that stretch reads PSVARVELPSENALSMQGGWQDSNVRM. A helical transmembrane segment spans residues 220–240; the sequence is LFVASTLMWTCNTMYIIDMPL. The Periplasmic portion of the chain corresponds to 241–251; it reads WISSELGLPDK. A helical transmembrane segment spans residues 252–272; that stretch reads LAGFLMGTAAGLEIPAMILAG. Residues 273-282 lie on the Cytoplasmic side of the membrane; the sequence is YYVKRYGKRR. The chain crosses the membrane as a helical span at residues 283-303; sequence MMVIAVAAGVLFYTGLIFFNS. Topologically, residues 304–308 are periplasmic; that stretch reads RMALM. A helical transmembrane segment spans residues 309 to 329; that stretch reads TLQLFNAVFIGIVAGIGMLWF. At 330 to 342 the chain is on the cytoplasmic side; it reads QDLMPGRAGAATT. The helical transmembrane segment at 343–363 threads the bilayer; that stretch reads LFTNSISTGVILAGVIQGAIA. Residues 364 to 365 are Periplasmic-facing; that stretch reads QS. Residues 366-386 traverse the membrane as a helical segment; it reads WGHFAVYWVIAVISVVALFLT. At 387-392 the chain is on the cytoplasmic side; it reads AKVKDV.

Belongs to the major facilitator superfamily. Set transporter family.

It is found in the cell inner membrane. Functionally, involved in the efflux of sugars. The physiological role may be the detoxification of non-metabolizable sugar analogs. Can transport IPTG, lactose and glucose. Has broad substrate specificity, with preferences for glucosides or galactosides with alkyl or aryl substituents. The polypeptide is Sugar efflux transporter A (setA) (Escherichia coli (strain K12)).